Here is a 244-residue protein sequence, read N- to C-terminus: tRNA1(Val) (adenine(37)-N6)-methyltransferase (244 aa).

The protein belongs to the methyltransferase superfamily. tRNA (adenine-N(6)-)-methyltransferase family.

It is found in the cytoplasm. It carries out the reaction adenosine(37) in tRNA1(Val) + S-adenosyl-L-methionine = N(6)-methyladenosine(37) in tRNA1(Val) + S-adenosyl-L-homocysteine + H(+). Functionally, specifically methylates the adenine in position 37 of tRNA(1)(Val) (anticodon cmo5UAC). The sequence is that of tRNA1(Val) (adenine(37)-N6)-methyltransferase from Shewanella sediminis (strain HAW-EB3).